A 157-amino-acid polypeptide reads, in one-letter code: 6,7-dimethyl-8-ribityllumazine synthase (157 aa).

Residues phenylalanine 25, 59-61, and 83-85 each bind 5-amino-6-(D-ribitylamino)uracil; these read AME and AII. 88 to 89 contacts (2S)-2-hydroxy-3-oxobutyl phosphate; that stretch reads ST. Histidine 91 (proton donor) is an active-site residue. Residue phenylalanine 116 participates in 5-amino-6-(D-ribitylamino)uracil binding. Arginine 130 lines the (2S)-2-hydroxy-3-oxobutyl phosphate pocket.

Belongs to the DMRL synthase family.

It catalyses the reaction (2S)-2-hydroxy-3-oxobutyl phosphate + 5-amino-6-(D-ribitylamino)uracil = 6,7-dimethyl-8-(1-D-ribityl)lumazine + phosphate + 2 H2O + H(+). It participates in cofactor biosynthesis; riboflavin biosynthesis; riboflavin from 2-hydroxy-3-oxobutyl phosphate and 5-amino-6-(D-ribitylamino)uracil: step 1/2. In terms of biological role, catalyzes the formation of 6,7-dimethyl-8-ribityllumazine by condensation of 5-amino-6-(D-ribitylamino)uracil with 3,4-dihydroxy-2-butanone 4-phosphate. This is the penultimate step in the biosynthesis of riboflavin. This is 6,7-dimethyl-8-ribityllumazine synthase from Lawsonia intracellularis (strain PHE/MN1-00).